Reading from the N-terminus, the 548-residue chain is Glutamate--tRNA ligase (548 aa).

Residues 102–112 (PSPSGPLHIGH) carry the 'HIGH' region motif.

It belongs to the class-I aminoacyl-tRNA synthetase family. Glutamate--tRNA ligase type 2 subfamily.

It localises to the cytoplasm. It carries out the reaction tRNA(Glu) + L-glutamate + ATP = L-glutamyl-tRNA(Glu) + AMP + diphosphate. Catalyzes the attachment of glutamate to tRNA(Glu) in a two-step reaction: glutamate is first activated by ATP to form Glu-AMP and then transferred to the acceptor end of tRNA(Glu). In Thermoplasma acidophilum (strain ATCC 25905 / DSM 1728 / JCM 9062 / NBRC 15155 / AMRC-C165), this protein is Glutamate--tRNA ligase.